The following is a 177-amino-acid chain: Peptide deformylase (177 aa).

Cys-99 and His-141 together coordinate Fe cation. Glu-142 is a catalytic residue. Residue His-145 participates in Fe cation binding.

Belongs to the polypeptide deformylase family. Requires Fe(2+) as cofactor.

It carries out the reaction N-terminal N-formyl-L-methionyl-[peptide] + H2O = N-terminal L-methionyl-[peptide] + formate. Removes the formyl group from the N-terminal Met of newly synthesized proteins. Requires at least a dipeptide for an efficient rate of reaction. N-terminal L-methionine is a prerequisite for activity but the enzyme has broad specificity at other positions. The polypeptide is Peptide deformylase (Rhizorhabdus wittichii (strain DSM 6014 / CCUG 31198 / JCM 15750 / NBRC 105917 / EY 4224 / RW1) (Sphingomonas wittichii)).